The chain runs to 87 residues: Large ribosomal subunit protein bL31B (87 aa).

It belongs to the bacterial ribosomal protein bL31 family. Type B subfamily. In terms of assembly, part of the 50S ribosomal subunit.

This Burkholderia pseudomallei (strain 1106a) protein is Large ribosomal subunit protein bL31B.